The sequence spans 401 residues: Short chain dehydrogenase/reductase dpchH (401 aa).

N16 is a glycosylation site (N-linked (GlcNAc...) asparagine). A helical membrane pass occupies residues 51–71; the sequence is VRAVDVLFGTFLYVPLGILFL. NAD(+)-binding positions include 72–80, 99–100, and 118–120; these read KKSLSGFGD, TG, and AKV. An N-linked (GlcNAc...) asparagine glycan is attached at N242. Y275 (proton acceptor) is an active-site residue. Residues 275–279 and 308–310 contribute to the NAD(+) site; these read YGTSK and GTI. N386 carries an N-linked (GlcNAc...) asparagine glycan.

The protein localises to the membrane. The protein operates within secondary metabolite biosynthesis; terpenoid biosynthesis. Functionally, short chain dehydrogenase/reductase; part of the gene cluster that mediates the biosynthesis of the diterpenoid pyrones higginsianins A and B. The first step of the pathway is the synthesis of the alpha-pyrone moiety by the polyketide synthase dpchA via condensation of one acetyl-CoA starter unit with 3 malonyl-CoA units and 2 methylations. The alpha-pyrone is then combined with geranylgeranyl pyrophosphate (GGPP) formed by the GGPP synthase dpchD through the action of the prenyltransferase dpchC to yield a linear alpha-pyrone diterpenoid. Subsequent steps in the diterpenoid pyrone biosynthetic pathway involve the decalin core formation, which is initiated by the epoxidation of the C10-C11 olefin by the FAD-dependent oxidoreductase dpchE, and is followed by a cyclization cascade catalyzed by the terpene cyclase dpchB. The short chain dehydrogenase/reductase dpchG then oxidizes the 8S hydroxy group to a ketone and the short chain dehydrogenase/reductase dpchH reduces the ketone to the 8R hydroxy group to yield higginsianin B. Finally, the FAD-dependent oxidoreductase dpchF converts higginsianin B into higginsianin A. This is Short chain dehydrogenase/reductase dpchH from Colletotrichum higginsianum (strain IMI 349063) (Crucifer anthracnose fungus).